A 346-amino-acid chain; its full sequence is UDP-3-O-acylglucosamine N-acyltransferase (346 aa).

The active-site Proton acceptor is histidine 240.

Belongs to the transferase hexapeptide repeat family. LpxD subfamily. Homotrimer.

It carries out the reaction a UDP-3-O-[(3R)-3-hydroxyacyl]-alpha-D-glucosamine + a (3R)-hydroxyacyl-[ACP] = a UDP-2-N,3-O-bis[(3R)-3-hydroxyacyl]-alpha-D-glucosamine + holo-[ACP] + H(+). Its pathway is bacterial outer membrane biogenesis; LPS lipid A biosynthesis. Its function is as follows. Catalyzes the N-acylation of UDP-3-O-acylglucosamine using 3-hydroxyacyl-ACP as the acyl donor. Is involved in the biosynthesis of lipid A, a phosphorylated glycolipid that anchors the lipopolysaccharide to the outer membrane of the cell. This is UDP-3-O-acylglucosamine N-acyltransferase from Bacteroides fragilis (strain ATCC 25285 / DSM 2151 / CCUG 4856 / JCM 11019 / LMG 10263 / NCTC 9343 / Onslow / VPI 2553 / EN-2).